Reading from the N-terminus, the 92-residue chain is uncharacterized protein (92 aa).

Residues 1 to 92 (MSDAAAPAQA…PSPSQQQVAA (92 aa)) are disordered.

This is an uncharacterized protein from Caenorhabditis elegans.